Reading from the N-terminus, the 69-residue chain is Ribosome modulation factor (69 aa).

Belongs to the ribosome modulation factor family.

The protein resides in the cytoplasm. In terms of biological role, during stationary phase, converts 70S ribosomes to an inactive dimeric form (100S ribosomes). This is Ribosome modulation factor from Chromohalobacter salexigens (strain ATCC BAA-138 / DSM 3043 / CIP 106854 / NCIMB 13768 / 1H11).